We begin with the raw amino-acid sequence, 144 residues long: Large ribosomal subunit protein uL16 (144 aa).

The protein belongs to the universal ribosomal protein uL16 family. In terms of assembly, part of the 50S ribosomal subunit.

In terms of biological role, binds 23S rRNA and is also seen to make contacts with the A and possibly P site tRNAs. In Erythrobacter litoralis (strain HTCC2594), this protein is Large ribosomal subunit protein uL16.